We begin with the raw amino-acid sequence, 650 residues long: MDSGDATSLLLTKIRSLEPDYAPKIIGYLLLHDFGDRDLMHLARGPESILQSTISKVKSLLGIFSNNSPSSTPTSPSPLNPICRPPLNGRGSSHSNGFMDFRRNSPSSPSSTSPWSFNNCINGNNGNNPHISPKHTPISKPFSSHQSNGLSATHSGSADAAGGADLLDDQQLNDCLSFLDDSCSKTEDLVDPSIPLDYSVDGDGETHLHRRSFSCDASFVSGDDGFGGGCKPCVYFSRGLCKNGESCKFIHGGYPDNMDGNGIVADSPRKMENFVRQHEEMMRLKLAYQQQRLASQILGRAPQLPYEKRMDFLLQQHAQRDGGLPFGDERFWSSSPGRLERMELAMHLGDQSNSASRQIYLTFPADSTFKDEDVATYFSLFGTVQDVRIPYQQKRMFGFVSFAHPETVKVVLARGNPHFICDSRVLVKPYKEKGKVLDKKQQQLLQQQIERGNYSPCSSPSGIDPREQSDFHLGSKMLYERREMMRRKIEQADLLRAIELERRRFINLQLPEFKNSVTLNHHRSFSVGSPGYFSSAGNQSPDFQSELNGADALKVTDDTLELHPYPVVNPMSVNNSYSNGAKEETNKSELLDPDSGSTIELVLPSNLFPSASSTDDHKTDDSAETNAKVGVSSTNENDHEPPVTTNNLMQ.

Positions N67–G162 are disordered. Residues S105–N128 are compositionally biased toward low complexity. The span at P141 to H154 shows a compositional bias: polar residues. Residues P232–Y254 form a C3H1-type zinc finger. The 77-residue stretch at R357 to K433 folds into the RRM domain. The segment at P566 to Q650 is disordered. Over residues A581–L590 the composition is skewed to basic and acidic residues.

This is Zinc finger CCCH domain-containing protein 55 from Arabidopsis thaliana (Mouse-ear cress).